The primary structure comprises 438 residues: Fibrinogen gamma chain (438 aa).

Residues 1–25 form the signal peptide; it reads MTRLPKQGLLLLQSLALLSSAFGNI. N-linked (GlcNAc...) asparagine glycosylation is present at Asn-76. The Fibrinogen C-terminal domain maps to 167 to 414; that stretch reads QIQEFTGKDC…SVTMKIMPLN (248 aa). Cys-176 and Cys-205 are disulfide-bonded. Ca(2+) contacts are provided by Asp-341, Asp-343, and Gly-347. Cys-349 and Cys-362 are oxidised to a cystine.

As to quaternary structure, heterohexamer; disulfide linked. Contains 2 sets of 3 non-identical chains (alpha, beta and gamma). The 2 heterotrimers are in head to head conformation with the N-termini in a small central domain. In terms of processing, conversion of fibrinogen to fibrin is triggered by thrombin, which cleaves fibrinopeptides A and B from alpha and beta chains, and thus exposes the N-terminal polymerization sites responsible for the formation of the soft clot. The soft clot is converted into the hard clot by factor XIIIA which catalyzes the epsilon-(gamma-glutamyl)lysine cross-linking between gamma chains (stronger) and between alpha chains (weaker) of different monomers.

The protein resides in the secreted. Its function is as follows. Together with fibrinogen alpha (FGA) and fibrinogen beta (FGB), polymerizes to form an insoluble fibrin matrix. Has a major function in hemostasis as one of the primary components of blood clots. This is Fibrinogen gamma chain (fgg) from Xenopus laevis (African clawed frog).